We begin with the raw amino-acid sequence, 663 residues long: UvrABC system protein B (663 aa).

A Helicase ATP-binding domain is found at 30 to 417 (DGIKAGKRHQ…TDKMVEQIIR (388 aa)). 43–50 (GATGTGKT) is a binding site for ATP. The Beta-hairpin signature appears at 96–119 (YYDYYQPEAYVPSTDTFIEKDASI). Positions 434-600 (QIDDLLSEIQ…TINKKIHDLI (167 aa)) constitute a Helicase C-terminal domain. In terms of domain architecture, UVR spans 627–662 (QKTIDNIEKEMKQAAKDLDFEKATELRDMLFELKAE).

It belongs to the UvrB family. As to quaternary structure, forms a heterotetramer with UvrA during the search for lesions. Interacts with UvrC in an incision complex.

Its subcellular location is the cytoplasm. Functionally, the UvrABC repair system catalyzes the recognition and processing of DNA lesions. A damage recognition complex composed of 2 UvrA and 2 UvrB subunits scans DNA for abnormalities. Upon binding of the UvrA(2)B(2) complex to a putative damaged site, the DNA wraps around one UvrB monomer. DNA wrap is dependent on ATP binding by UvrB and probably causes local melting of the DNA helix, facilitating insertion of UvrB beta-hairpin between the DNA strands. Then UvrB probes one DNA strand for the presence of a lesion. If a lesion is found the UvrA subunits dissociate and the UvrB-DNA preincision complex is formed. This complex is subsequently bound by UvrC and the second UvrB is released. If no lesion is found, the DNA wraps around the other UvrB subunit that will check the other stand for damage. The protein is UvrABC system protein B of Staphylococcus aureus (strain Mu50 / ATCC 700699).